The chain runs to 369 residues: Chaperone protein DnaJ (369 aa).

Residues 5–69 (DYYDVLGISK…NKKAQYDRFG (65 aa)) form the J domain. The CR-type zinc finger occupies 131 to 213 (GTTKNVSVDI…CSGAGRVKAK (83 aa)). Cys144, Cys147, Cys161, Cys164, Cys187, Cys190, Cys201, and Cys204 together coordinate Zn(2+). 4 CXXCXGXG motif repeats span residues 144–151 (CGHCHGSG), 161–168 (CSKCHGQG), 187–194 (CPQCQGEG), and 201–208 (CHVCSGAG).

The protein belongs to the DnaJ family. Homodimer. Zn(2+) is required as a cofactor.

Its subcellular location is the cytoplasm. Its function is as follows. Participates actively in the response to hyperosmotic and heat shock by preventing the aggregation of stress-denatured proteins and by disaggregating proteins, also in an autonomous, DnaK-independent fashion. Unfolded proteins bind initially to DnaJ; upon interaction with the DnaJ-bound protein, DnaK hydrolyzes its bound ATP, resulting in the formation of a stable complex. GrpE releases ADP from DnaK; ATP binding to DnaK triggers the release of the substrate protein, thus completing the reaction cycle. Several rounds of ATP-dependent interactions between DnaJ, DnaK and GrpE are required for fully efficient folding. Also involved, together with DnaK and GrpE, in the DNA replication of plasmids through activation of initiation proteins. The protein is Chaperone protein DnaJ of Acholeplasma laidlawii.